A 344-amino-acid polypeptide reads, in one-letter code: Succinylglutamate desuccinylase (344 aa).

Residues histidine 63, glutamate 66, and histidine 160 each coordinate Zn(2+). Glutamate 224 is an active-site residue.

It belongs to the AspA/AstE family. Succinylglutamate desuccinylase subfamily. Zn(2+) serves as cofactor.

The enzyme catalyses N-succinyl-L-glutamate + H2O = L-glutamate + succinate. Its pathway is amino-acid degradation; L-arginine degradation via AST pathway; L-glutamate and succinate from L-arginine: step 5/5. In terms of biological role, transforms N(2)-succinylglutamate into succinate and glutamate. In Shewanella putrefaciens (strain CN-32 / ATCC BAA-453), this protein is Succinylglutamate desuccinylase.